The primary structure comprises 238 residues: UPF0758 protein Ajs_3450 (238 aa).

Residues 116 to 238 (VFDSPQAVQH…ALSMAEQGLV (123 aa)) form the MPN domain. Residues His187, His189, and Asp200 each contribute to the Zn(2+) site. The JAMM motif signature appears at 187 to 200 (HNHPSGSVQPSRAD).

The protein belongs to the UPF0758 family.

This Acidovorax sp. (strain JS42) protein is UPF0758 protein Ajs_3450.